The chain runs to 314 residues: Short-chain dehydrogenase/reductase drtF (314 aa).

Residues Val-26, Lys-50, Asp-73, Asn-100, Tyr-185, and Lys-189 each contribute to the NADP(+) site. The active-site Proton acceptor is the Tyr-185. The active-site Lowers pKa of active site Tyr is the Lys-189.

The protein belongs to the short-chain dehydrogenases/reductases (SDR) family.

The protein operates within secondary metabolite biosynthesis; terpenoid biosynthesis. In terms of biological role, short-chain dehydrogenase/reductase; part of the gene cluster that mediates the biosynthesis of various drimane-type sesquiterpene esters, compounds that exhibit diverse biological activities and are widely present in eukaryotes. The pathway begins with the synthesis of the backbone drimenol by the terpene cyclase drtB using farnesyl pyrophosphate (FPP) as substrate. The cytochrome P450 monooxygenase drtD is then responsible for the hydroxylations at C-6, C-9 and C-12, as well as the oxidation of hydroxyl groups at C-6 and C-11 to a ketone and an aldehyde, respectively. Then, the biosynthesis can go in two directions, either the hydroxylated drimenol is further hydroxylated at C-2 and C-3 by an enzyme(s) not associated with the drt cluster, or the FAD-binding oxidoreductase drtC further oxidizes C-11 or C-12 to form the butyrolactone ring. DrtB, drtD and drtC are solely responsible for the formation of the different drimane structures observed during drimane sesquiterpenes biosynthesis. The polyketide synthase drtA synthesizes different lengths (C6 and C8) of PKS chains, which are then oxidized to varying degrees by the short-chain dehydrogenase drtF. Finally, these PKS chains are transferred onto drimane sesquiterpenes by the acyltransferase drtE, forming the sesquiterpene esters. In addition to the different fatty acyl-CoA chains produced by drtA, drtE is also able to use cinnamoyl-CoA as a substrate. This chain is Short-chain dehydrogenase/reductase drtF, found in Aspergillus calidoustus.